The primary structure comprises 110 residues: UPF0060 membrane protein BPSL1340 (110 aa).

Helical transmembrane passes span 9–29 (ALFV…WLVL), 34–54 (PAWL…LLTL), 64–84 (AAYG…VDGV), and 86–106 (LSRW…VIAL).

Belongs to the UPF0060 family.

It is found in the cell inner membrane. In Burkholderia pseudomallei (strain K96243), this protein is UPF0060 membrane protein BPSL1340.